The sequence spans 68 residues: Small integral membrane protein 45 (68 aa).

The chain crosses the membrane as a helical span at residues 7–27 (WFVPVYLVISVLILVGFGACI).

Highly expressed in brain.

The protein localises to the nucleus. Its subcellular location is the cytoplasm. It is found in the membrane. Plays a role in the regulation of neuron maturation. The chain is Small integral membrane protein 45 from Homo sapiens (Human).